A 1250-amino-acid chain; its full sequence is DNA topoisomerase 3-alpha (1250 aa).

Residues 27–171 (KYLNVAEKND…NISVYRATFS (145 aa)) enclose the Toprim domain. Residues 189-610 (DKRQSDAVDV…EQIAKYKQAY (422 aa)) enclose the Topo IA-type catalytic domain. Residue tyrosine 356 is the O-(5'-phospho-DNA)-tyrosine intermediate of the active site. Positions 769–835 (RGGGGGPGPG…GTGGGGLGGG (67 aa)) are enriched in gly residues. Disordered regions lie at residues 769–899 (RGGG…GLDE) and 953–1035 (NGGT…TVLC). A compositionally biased stretch (basic and acidic residues) spans 840 to 865 (PGGESKKSATKKPPNEPKPKKTKEPK). A compositionally biased stretch (low complexity) spans 866 to 886 (AAPNKKTSSKSSGSIRSFFTS). The span at 956–965 (TMPTESNGDQ) shows a compositional bias: polar residues. Basic and acidic residues-rich tracts occupy residues 966 to 994 (QLDK…RERA) and 1012 to 1021 (PRWDSVERDS). Positions 1022–1033 (TPPSSVPESETV) are enriched in low complexity. Positions 1035, 1038, 1061, and 1067 each coordinate Zn(2+). The GRF-type 1 zinc-finger motif lies at 1035–1076 (CTGCQQPARQNTVRKNGPNLGRLYYKCPKPDECNFFQWADEP). A disordered region spans residues 1069–1150 (FFQWADEPPS…TATPGDGEEV (82 aa)). Positions 1079 to 1101 (SAKSKNSTGSAPQSTTSWGSNRV) are enriched in polar residues. The segment covering 1106-1134 (SIQQSNSQRGQSSMRSNSSSTVTITQTKT) has biased composition (low complexity). The Zn(2+) site is built by cysteine 1152, cysteine 1154, cysteine 1177, and cysteine 1184. The GRF-type 2 zinc finger occupies 1152 to 1193 (CNCGQLASQLTVRKDGPNQGRPFYACPTREKSCGFFKWGDED). Residues 1188-1231 (KWGDEDQNQGASSTSWGSANRNPPGRSQPTAITSDGPKTRRCGL) are disordered. Over residues 1195–1220 (NQGASSTSWGSANRNPPGRSQPTAIT) the composition is skewed to polar residues.

Belongs to the type IA topoisomerase family.

It carries out the reaction ATP-independent breakage of single-stranded DNA, followed by passage and rejoining.. Its function is as follows. Releases the supercoiling and torsional tension of DNA introduced during the DNA replication and transcription by transiently cleaving and rejoining one strand of the DNA duplex. Introduces a single-strand break via transesterification at a target site in duplex DNA. The scissile phosphodiester is attacked by the catalytic tyrosine of the enzyme, resulting in the formation of a DNA-(5'-phosphotyrosyl)-enzyme intermediate and the expulsion of a 3'-OH DNA strand. The free DNA strand than undergoes passage around the unbroken strand thus removing DNA supercoils. Finally, in the religation step, the DNA 3'-OH attacks the covalent intermediate to expel the active-site tyrosine and restore the DNA phosphodiester backbone. Weakly relaxes negative supercoils and displays a distinct preference for binding single-stranded DNA. The sequence is that of DNA topoisomerase 3-alpha (Top3alpha) from Drosophila melanogaster (Fruit fly).